Consider the following 365-residue polypeptide: tRNA/tmRNA (uracil-C(5))-methyltransferase (365 aa).

S-adenosyl-L-methionine-binding residues include Q189, Y217, N222, E238, and D298. C323 (nucleophile) is an active-site residue. The active-site Proton acceptor is E357.

The protein belongs to the class I-like SAM-binding methyltransferase superfamily. RNA M5U methyltransferase family. TrmA subfamily.

The enzyme catalyses uridine(54) in tRNA + S-adenosyl-L-methionine = 5-methyluridine(54) in tRNA + S-adenosyl-L-homocysteine + H(+). The catalysed reaction is uridine(341) in tmRNA + S-adenosyl-L-methionine = 5-methyluridine(341) in tmRNA + S-adenosyl-L-homocysteine + H(+). Its function is as follows. Dual-specificity methyltransferase that catalyzes the formation of 5-methyluridine at position 54 (m5U54) in all tRNAs, and that of position 341 (m5U341) in tmRNA (transfer-mRNA). This Shewanella amazonensis (strain ATCC BAA-1098 / SB2B) protein is tRNA/tmRNA (uracil-C(5))-methyltransferase.